The chain runs to 369 residues: Type 2 DNA topoisomerase 6 subunit A (369 aa).

Residues lysine 11–alanine 149 form the Topo IIA-type catalytic domain. Tyrosine 106 acts as the O-(5'-phospho-DNA)-tyrosine intermediate in catalysis. Glutamate 202 and aspartate 254 together coordinate Mg(2+).

The protein belongs to the TOP6A family. As to quaternary structure, homodimer. Heterotetramer of two Top6A and two Top6B chains. Mg(2+) serves as cofactor.

It carries out the reaction ATP-dependent breakage, passage and rejoining of double-stranded DNA.. Functionally, relaxes both positive and negative superturns and exhibits a strong decatenase activity. The polypeptide is Type 2 DNA topoisomerase 6 subunit A (Methanosarcina mazei (strain ATCC BAA-159 / DSM 3647 / Goe1 / Go1 / JCM 11833 / OCM 88) (Methanosarcina frisia)).